A 319-amino-acid polypeptide reads, in one-letter code: tRNA uridine(34) hydroxylase (319 aa).

The Rhodanese domain occupies 124 to 218; it reads LDEDTVILDA…YGKNEETKGE (95 aa). C178 acts as the Cysteine persulfide intermediate in catalysis.

It belongs to the TrhO family.

The catalysed reaction is uridine(34) in tRNA + AH2 + O2 = 5-hydroxyuridine(34) in tRNA + A + H2O. Catalyzes oxygen-dependent 5-hydroxyuridine (ho5U) modification at position 34 in tRNAs. The sequence is that of tRNA uridine(34) hydroxylase from Listeria monocytogenes serotype 4a (strain HCC23).